The following is a 186-amino-acid chain: MVVVGLGNPGPRYAFTRHNVGFLFLDFLKNKDWKTEKYFAWNKINLAGNEVALVKPLTYMNLSGLAMPHVLKFFSASLDDIIVVYDDVSLKLGKIRIRKKGSDGGHNGMKSIIQALGTQEIKRIRVGIGDKPEGMDLVNFVLGEFSDEEWIILNKVFEVMKEALEVILVEGIEKAMSIYNSLEVRA.

A tRNA-binding site is contributed by tyrosine 13. Histidine 18 functions as the Proton acceptor in the catalytic mechanism. TRNA-binding residues include tyrosine 59, asparagine 61, and asparagine 107.

It belongs to the PTH family. As to quaternary structure, monomer.

Its subcellular location is the cytoplasm. It catalyses the reaction an N-acyl-L-alpha-aminoacyl-tRNA + H2O = an N-acyl-L-amino acid + a tRNA + H(+). Hydrolyzes ribosome-free peptidyl-tRNAs (with 1 or more amino acids incorporated), which drop off the ribosome during protein synthesis, or as a result of ribosome stalling. Its function is as follows. Catalyzes the release of premature peptidyl moieties from peptidyl-tRNA molecules trapped in stalled 50S ribosomal subunits, and thus maintains levels of free tRNAs and 50S ribosomes. The chain is Peptidyl-tRNA hydrolase from Thermotoga maritima (strain ATCC 43589 / DSM 3109 / JCM 10099 / NBRC 100826 / MSB8).